The sequence spans 218 residues: Putative transposase InsD for insertion element IS2E (218 aa).

Residues 23–206 (KPAVPPSKRA…SPREYLRQRA (184 aa)) form the Integrase catalytic domain.

Involved in the transposition of the insertion sequence IS2. The protein is Putative transposase InsD for insertion element IS2E (insD8) of Escherichia coli (strain K12).